A 467-amino-acid polypeptide reads, in one-letter code: Peroxisome proliferator-activated receptor alpha (467 aa).

The segment at residues 99 to 173 (NIECRICGDK…VGMSHNAIRF (75 aa)) is a DNA-binding region (nuclear receptor). 2 NR C4-type zinc fingers span residues 102–122 (CRICGDKASGYHYGVHACEGC) and 139–161 (CDRSCKIQKKNRNKCQYCRFHKC). In terms of domain architecture, NR LBD spans 239-466 (FVIHDMETLC…PLLQEIYRDM (228 aa)). The required for heterodimerization with RXRA stretch occupies residues 304-433 (DQVTLLKYGV…PKLLQKLADL (130 aa)).

This sequence belongs to the nuclear hormone receptor family. NR1 subfamily. In terms of assembly, heterodimer; with RXRA. This heterodimerization is required for DNA binding and transactivation activity. Interacts with NCOA3 coactivator. Interacts with CITED2; the interaction stimulates its transcriptional activity. Also interacts with PPARBP in vitro. Interacts with AKAP13, LPIN1, PRDM16 and coactivator NCOA6. Interacts with ASXL1 and ASXL2. Interacts with PER2. Interacts with SIRT1; the interaction seems to be modulated by NAD(+) levels. Interacts with CRY1 and CRY2. In hepatocytes, interacts with PAQR3 and HUWE1; the interactions promote PPARA poylubiquitination and HUWE1-mediated degradation. Post-translationally, ubiquitinated by E3 ubiquitin-protein ligase HUWE1; leading to proteasomal degradation. Phosphorylated.

It is found in the nucleus. In terms of biological role, ligand-activated transcription factor. Key regulator of lipid metabolism. Activated by the endogenous ligand 1-palmitoyl-2-oleoyl-sn-glycerol-3-phosphocholine (16:0/18:1-GPC). Activated by oleylethanolamide, a naturally occurring lipid that regulates satiety. Receptor for peroxisome proliferators such as hypolipidemic drugs and fatty acids. Regulates the peroxisomal beta-oxidation pathway of fatty acids. Functions as a transcription activator for the ACOX1 and P450 genes. Transactivation activity requires heterodimerization with RXRA and is antagonized by NR2C2. May be required for the propagation of clock information to metabolic pathways regulated by PER2. This is Peroxisome proliferator-activated receptor alpha (PPARA) from Cavia porcellus (Guinea pig).